A 624-amino-acid chain; its full sequence is DNA mismatch repair protein MutL (624 aa).

The segment at 336–357 (GEGFHETSDSFSSRSSQHSDAR) is disordered. Positions 344 to 353 (DSFSSRSSQH) are enriched in low complexity.

The protein belongs to the DNA mismatch repair MutL/HexB family.

This protein is involved in the repair of mismatches in DNA. It is required for dam-dependent methyl-directed DNA mismatch repair. May act as a 'molecular matchmaker', a protein that promotes the formation of a stable complex between two or more DNA-binding proteins in an ATP-dependent manner without itself being part of a final effector complex. This chain is DNA mismatch repair protein MutL, found in Chlorobium phaeobacteroides (strain BS1).